Here is a 233-residue protein sequence, read N- to C-terminus: 5'-methylthioadenosine/S-adenosylhomocysteine nucleosidase (233 aa).

The active-site Proton acceptor is the Glu-12. Residues Gly-78, Ile-156, and 177–178 (ME) each bind substrate. Asp-201 (proton donor) is an active-site residue.

Belongs to the PNP/UDP phosphorylase family. MtnN subfamily.

The enzyme catalyses S-adenosyl-L-homocysteine + H2O = S-(5-deoxy-D-ribos-5-yl)-L-homocysteine + adenine. The catalysed reaction is S-methyl-5'-thioadenosine + H2O = 5-(methylsulfanyl)-D-ribose + adenine. It catalyses the reaction 5'-deoxyadenosine + H2O = 5-deoxy-D-ribose + adenine. The protein operates within amino-acid biosynthesis; L-methionine biosynthesis via salvage pathway; S-methyl-5-thio-alpha-D-ribose 1-phosphate from S-methyl-5'-thioadenosine (hydrolase route): step 1/2. In terms of biological role, catalyzes the irreversible cleavage of the glycosidic bond in both 5'-methylthioadenosine (MTA) and S-adenosylhomocysteine (SAH/AdoHcy) to adenine and the corresponding thioribose, 5'-methylthioribose and S-ribosylhomocysteine, respectively. Also cleaves 5'-deoxyadenosine, a toxic by-product of radical S-adenosylmethionine (SAM) enzymes, into 5-deoxyribose and adenine. In Listeria welshimeri serovar 6b (strain ATCC 35897 / DSM 20650 / CCUG 15529 / CIP 8149 / NCTC 11857 / SLCC 5334 / V8), this protein is 5'-methylthioadenosine/S-adenosylhomocysteine nucleosidase.